Reading from the N-terminus, the 211-residue chain is FMN-dependent NADH:quinone oxidoreductase (211 aa).

Residue 17–19 (SYS) coordinates FMN.

Belongs to the azoreductase type 1 family. In terms of assembly, homodimer. FMN is required as a cofactor.

The catalysed reaction is 2 a quinone + NADH + H(+) = 2 a 1,4-benzosemiquinone + NAD(+). It carries out the reaction N,N-dimethyl-1,4-phenylenediamine + anthranilate + 2 NAD(+) = 2-(4-dimethylaminophenyl)diazenylbenzoate + 2 NADH + 2 H(+). Its function is as follows. Quinone reductase that provides resistance to thiol-specific stress caused by electrophilic quinones. Functionally, also exhibits azoreductase activity. Catalyzes the reductive cleavage of the azo bond in aromatic azo compounds to the corresponding amines. In Bacillus velezensis (strain DSM 23117 / BGSC 10A6 / LMG 26770 / FZB42) (Bacillus amyloliquefaciens subsp. plantarum), this protein is FMN-dependent NADH:quinone oxidoreductase.